The sequence spans 477 residues: 23S rRNA (uracil(1939)-C(5))-methyltransferase RlmD (477 aa).

One can recognise a TRAM domain in the interval 7–66 (KTENFPPDWLLVESLDLEAQGVAHRADGKVVFIKGALPFELVSANVHRKKNNWEQGVVTA). 4 residues coordinate [4Fe-4S] cluster: Cys79, Cys89, Cys92, and Cys171. S-adenosyl-L-methionine contacts are provided by Gln280, Phe309, Asn314, Glu330, Asn365, and Asp386. The Nucleophile role is filled by Cys432.

It belongs to the class I-like SAM-binding methyltransferase superfamily. RNA M5U methyltransferase family. RlmD subfamily.

It catalyses the reaction uridine(1939) in 23S rRNA + S-adenosyl-L-methionine = 5-methyluridine(1939) in 23S rRNA + S-adenosyl-L-homocysteine + H(+). Functionally, catalyzes the formation of 5-methyl-uridine at position 1939 (m5U1939) in 23S rRNA. This is 23S rRNA (uracil(1939)-C(5))-methyltransferase RlmD from Albidiferax ferrireducens (strain ATCC BAA-621 / DSM 15236 / T118) (Rhodoferax ferrireducens).